A 313-amino-acid chain; its full sequence is Aspartate carbamoyltransferase catalytic subunit (313 aa).

Residues Arg58 and Thr59 each contribute to the carbamoyl phosphate site. Lys86 contacts L-aspartate. Carbamoyl phosphate contacts are provided by Arg108, His136, and Gln139. Arg169 and Arg223 together coordinate L-aspartate. Carbamoyl phosphate contacts are provided by Gly264 and Pro265.

The protein belongs to the aspartate/ornithine carbamoyltransferase superfamily. ATCase family. As to quaternary structure, heterododecamer (2C3:3R2) of six catalytic PyrB chains organized as two trimers (C3), and six regulatory PyrI chains organized as three dimers (R2).

It carries out the reaction carbamoyl phosphate + L-aspartate = N-carbamoyl-L-aspartate + phosphate + H(+). It functions in the pathway pyrimidine metabolism; UMP biosynthesis via de novo pathway; (S)-dihydroorotate from bicarbonate: step 2/3. Its function is as follows. Catalyzes the condensation of carbamoyl phosphate and aspartate to form carbamoyl aspartate and inorganic phosphate, the committed step in the de novo pyrimidine nucleotide biosynthesis pathway. The sequence is that of Aspartate carbamoyltransferase catalytic subunit from Syntrophotalea carbinolica (strain DSM 2380 / NBRC 103641 / GraBd1) (Pelobacter carbinolicus).